The chain runs to 100 residues: A-type ATP synthase subunit F (100 aa).

This sequence belongs to the V-ATPase F subunit family. In terms of assembly, has multiple subunits with at least A(3), B(3), C, D, E, F, H, I and proteolipid K(x).

The protein resides in the cell membrane. In terms of biological role, component of the A-type ATP synthase that produces ATP from ADP in the presence of a proton gradient across the membrane. The sequence is that of A-type ATP synthase subunit F from Methanocorpusculum labreanum (strain ATCC 43576 / DSM 4855 / Z).